Here is a 122-residue protein sequence, read N- to C-terminus: Large ribosomal subunit protein bL17 (122 aa).

It belongs to the bacterial ribosomal protein bL17 family. Part of the 50S ribosomal subunit. Contacts protein L32.

The protein is Large ribosomal subunit protein bL17 of Nautilia profundicola (strain ATCC BAA-1463 / DSM 18972 / AmH).